The following is a 624-amino-acid chain: Interleukin-1 receptor-associated kinase-like 2 (624 aa).

One can recognise a Death domain in the interval 13–94 (LDDLCRNIDT…RAAQIVLSWK (82 aa)). Positions 210-475 (FDQSHRISEG…LPEACAETWA (266 aa)) constitute a Protein kinase domain. ATP is bound by residues 216–224 (ISEGTFADI), lysine 237, and 337–340 (KSAN). 2 disordered regions span residues 508–536 (SLPWSRVSEDTGSSSNTPEETDDVDNSSL) and 549–593 (RVSS…ETSW). Positions 558–577 (GNGTAQPSTSGRQEADSSSE) are enriched in polar residues.

It belongs to the protein kinase superfamily. TKL Ser/Thr protein kinase family. Pelle subfamily. As to quaternary structure, interacts with MYD88. IL-1 stimulation leads to the formation of a signaling complex which dissociates from the IL-1 receptor following the binding of PELI1.

In terms of biological role, binds to the IL-1 type I receptor following IL-1 engagement, triggering intracellular signaling cascades leading to transcriptional up-regulation and mRNA stabilization. The sequence is that of Interleukin-1 receptor-associated kinase-like 2 (Irak2) from Rattus norvegicus (Rat).